Reading from the N-terminus, the 455-residue chain is Zinc finger SWIM domain-containing protein 1 (455 aa).

A disordered region spans residues 264–288 (ASLSLAETPQDSHTPSEASAENPNT). Residues 333 to 375 (MSIQILEDTHTVQPQPPASCSCYFNQAFHLPCRHILAMLSARQ) form an SWIM-type zinc finger.

This Mus musculus (Mouse) protein is Zinc finger SWIM domain-containing protein 1 (Zswim1).